The primary structure comprises 398 residues: Alpha-2,8-sialyltransferase 8F (398 aa).

Topologically, residues 1-3 (MRS) are cytoplasmic. A helical; Signal-anchor for type II membrane protein membrane pass occupies residues 4–24 (GGTLFALIGSLMLLLLLRMLW). Over 25-398 (CPADAPARSR…KLQFSKCETA (374 aa)) the chain is Lumenal. Residues asparagine 66, asparagine 93, asparagine 151, and asparagine 196 are each glycosylated (N-linked (GlcNAc...) asparagine). Disulfide bonds link cysteine 186-cysteine 335 and cysteine 200-cysteine 395. Substrate-binding positions include asparagine 214, 236–238 (NPS), and 322–324 (STG). Residue histidine 370 is the Proton donor/acceptor of the active site.

Belongs to the glycosyltransferase 29 family. In terms of tissue distribution, highly expressed in kidney and expressed and all tissues tested.

The protein resides in the golgi apparatus membrane. It carries out the reaction a ganglioside GM3 + CMP-N-acetyl-beta-neuraminate = a ganglioside GD3 + CMP + H(+). It catalyses the reaction a ganglioside GM3 (d18:1(4E)) + CMP-N-acetyl-beta-neuraminate = a ganglioside GD3 (d18:1(4E)) + CMP + H(+). The catalysed reaction is a ganglioside GD1a (d18:1(4E)) + CMP-N-acetyl-beta-neuraminate = a ganglioside GT1a (d18:1(4E)) + CMP + H(+). The enzyme catalyses a ganglioside GD1a + CMP-N-acetyl-beta-neuraminate = a ganglioside GT1a + CMP + H(+). It carries out the reaction a ganglioside GM1b (d18:1(4E)) + CMP-N-acetyl-beta-neuraminate = a ganglioside GD1c (d18:1(4E)) + CMP + H(+). It catalyses the reaction a ganglioside GM1b + CMP-N-acetyl-beta-neuraminate = a ganglioside GD1c + CMP + H(+). The catalysed reaction is a ganglioside GM4 (d18:1(4E)) + CMP-N-acetyl-beta-neuraminate = an N-acetyl-alpha-neuraminosyl-(2-&gt;8)-N-acetyl-alpha-neuraminosyl-(2-&gt;3)-beta-D-galactosyl-(1&lt;-&gt;1')-N-acylsphing-4-enine + CMP + H(+). The enzyme catalyses N-acetyl-alpha-neuraminosyl-(2-&gt;3)-beta-D-galactosyl-(1&lt;-&gt;1')-ceramide + CMP-N-acetyl-beta-neuraminate = N-acetyl-alpha-neuraminosyl-(2-&gt;8)-N-acetyl-alpha-neuraminosyl-(2-&gt;3)-beta-D-galactosyl-(1&lt;-&gt;1')-ceramide + CMP + H(+). It carries out the reaction a ganglioside GT1b (d18:1(4E)) + CMP-N-acetyl-beta-neuraminate = a ganglioside GQ1b (d18:1(4E)) + CMP + H(+). It catalyses the reaction a ganglioside GT1b + CMP-N-acetyl-beta-neuraminate = a ganglioside GQ1b + CMP + H(+). The protein operates within protein modification; protein glycosylation. In terms of biological role, alpha-2,8-sialyltransferase that prefers O-glycans to N-glycans or glycolipids as acceptor substrates. The minimal acceptor substrate is the NeuAc-alpha-2,3(6)-Gal sequence at the non-reducing end of their carbohydrate groups. The protein is Alpha-2,8-sialyltransferase 8F of Mus musculus (Mouse).